The following is a 167-amino-acid chain: uncharacterized protein (167 aa).

This is an uncharacterized protein from Sus scrofa (Pig).